The chain runs to 928 residues: Sodium/calcium exchanger 3 (928 aa).

Positions 1–30 are cleaved as a signal peptide; that stretch reads MAWLRLQPLTSAFLHFGLVTFVLFLNCLRA. Topologically, residues 31–73 are extracellular; the sequence is EAGDSGDVPSAGQNNESCSGSSDCKEGVILPIWYPENPSLGDK. Asparagine 45 carries an N-linked (GlcNAc...) asparagine glycan. The chain crosses the membrane as a helical span at residues 74–94; the sequence is IARVIVYFVALIYMFLGVSII. Topologically, residues 95–147 are cytoplasmic; sequence ADRFMASIEVITSQEREVTIKKPNGETSTTTIRVWNETVSNLTLMALGSSAPE. Residues 148–168 form a helical membrane-spanning segment; the sequence is ILLSLIEVCGHGFIAGDLGPS. A topological domain (extracellular) is located at residue threonine 169. A helical transmembrane segment spans residues 170–190; that stretch reads IVGSAAFNMFIIIGICVYVIP. The Cytoplasmic portion of the chain corresponds to 191–201; the sequence is DGETRKIKHLR. Residues 202–222 traverse the membrane as a helical segment; it reads VFFVTAAWSIFAYIWLYMILA. Over 223–230 the chain is Extracellular; it reads VFSPGVVQ. The helical transmembrane segment at 231–251 threads the bilayer; sequence VWEGLLTLFFFPVCVLLAWVA. At 252 to 727 the chain is on the cytoplasmic side; the sequence is DKRLLFYKYM…DESGEERLPS (476 aa). The tract at residues 253–272 is putative calmodulin-binding region; the sequence is KRLLFYKYMHKKYRTDKHRG. Calx-beta domains lie at 390–485 and 519–618; these read EPED…VRLS and ATVT…VIEM. Ca(2+)-binding residues include glutamate 409, aspartate 445, aspartate 470, aspartate 471, isoleucine 473, glutamate 475, glutamate 478, aspartate 525, aspartate 526, aspartate 527, glutamate 543, aspartate 579, aspartate 605, and glutamate 673. The helical transmembrane segment at 728–748 threads the bilayer; the sequence is CFDYVMHFLTVFWKVLFACVP. Topologically, residues 749–755 are extracellular; sequence PTEYCHG. The helical transmembrane segment at 756–776 threads the bilayer; the sequence is WACFVVSILIIGMLTAIIGDL. The Cytoplasmic segment spans residues 777 to 779; it reads ASH. A helical transmembrane segment spans residues 780–800; it reads FGCTIGLKDSVTAVVFVAFGT. Residues 801-829 lie on the Extracellular side of the membrane; the sequence is SVPDTFASKAAALQDVYADASIGNVTGSN. N-linked (GlcNAc...) asparagine glycosylation is present at asparagine 824. The helical transmembrane segment at 830–850 threads the bilayer; that stretch reads AVNVFLGIGLAWSVAAIYWAM. The Cytoplasmic portion of the chain corresponds to 851 to 861; sequence QGQEFHVSAGT. Residues 862–882 traverse the membrane as a helical segment; the sequence is LAFSVTLFTIFAFVCLSVLLY. At 883-904 the chain is on the extracellular side; the sequence is RRRPHLGGELGGPRGCKLATTW. A helical transmembrane segment spans residues 905–925; sequence LFVSLWLLYILFATLEAYCYI. At 926-928 the chain is on the cytoplasmic side; that stretch reads KGF.

It belongs to the Ca(2+):cation antiporter (CaCA) (TC 2.A.19) family. SLC8 subfamily. As to quaternary structure, interacts with AKAP1. In terms of tissue distribution, detected in gray and white matter in the spinal cord. Detected in hippocampus neurons. Detected in brain cortex neurons. Detected in skeletal muscle (at protein level). Isoform 1 and isoform 2 are highly expressed in brain; levels are higher for isoform 2. Isoform 1 and isoform 2 are detected in soleus muscle; levels are higher for isoform 1. Detected in gastrocnemius muscle.

It localises to the cell membrane. The protein resides in the perikaryon. Its subcellular location is the cell projection. The protein localises to the dendrite. It is found in the dendritic spine. It localises to the sarcolemma. The protein resides in the cytoplasm. Its subcellular location is the sarcoplasm. The protein localises to the cell junction. It is found in the mitochondrion outer membrane. It localises to the perinuclear region. The protein resides in the endoplasmic reticulum membrane. The enzyme catalyses Ca(2+)(in) + 3 Na(+)(out) = Ca(2+)(out) + 3 Na(+)(in). Its activity is regulated as follows. Calcium transport is stimulated by cytoplasmic Ca(2+) and is inhibited by Na(+). Isoform 1 is more sensitive to stimulation by Ca(2+) than isoform 2. Isoform 2 is more sensitive to inactivation by Na(+). Functionally, mediates the electrogenic exchange of Ca(2+) against Na(+) ions across the cell membrane, and thereby contributes to the regulation of cytoplasmic Ca(2+) levels and Ca(2+)-dependent cellular processes. Contributes to cellular Ca(2+) homeostasis in excitable cells, both in muscle and in brain. In a first phase, voltage-gated channels mediate the rapid increase of cytoplasmic Ca(2+) levels due to release of Ca(2+) stores from the endoplasmic reticulum. SLC8A3 mediates the export of Ca(2+) from the cell during the next phase, so that cytoplasmic Ca(2+) levels rapidly return to baseline. Contributes to Ca(2+) transport during excitation-contraction coupling in muscle. In neurons, contributes to the rapid decrease of cytoplasmic Ca(2+) levels back to baseline after neuronal activation, and thereby contributes to modulate synaptic plasticity, learning and memory. Required for normal oligodendrocyte differentiation and for normal myelination. Mediates Ca(2+) efflux from mitochondria and contributes to mitochondrial Ca(2+) ion homeostasis. Isoform 1 displays higher calcium exchanger activity than isoform 2, probably because isoform 1 has a lower threshold for activation by cytoplasmic Ca(2+). The polypeptide is Sodium/calcium exchanger 3 (Mus musculus (Mouse)).